The following is a 398-amino-acid chain: Chalcone synthase 1 (398 aa).

58 to 65 (KFKRMCDK) contributes to the CoA binding site. Cysteine 167 functions as the Acyl-thioester intermediate in the catalytic mechanism. Residues threonine 200 and 219 to 220 (GD) each bind substrate. Position 311 (alanine 311) interacts with CoA.

It belongs to the thiolase-like superfamily. Chalcone/stilbene synthases family. Homodimer.

The catalysed reaction is (E)-4-coumaroyl-CoA + 3 malonyl-CoA + 3 H(+) = 2',4,4',6'-tetrahydroxychalcone + 3 CO2 + 4 CoA. The protein operates within secondary metabolite biosynthesis; flavonoid biosynthesis. In terms of biological role, the primary product of this enzyme is 4,2',4',6'-tetrahydroxychalcone (also termed naringenin-chalcone or chalcone) which can under specific conditions spontaneously isomerize into naringenin. This Oryza sativa subsp. indica (Rice) protein is Chalcone synthase 1 (CHS1).